Reading from the N-terminus, the 216-residue chain is MARIIDLVPWDECSAHLYASPAILIPLERVRRPLAGVKHQLYHPGLPSLRRMDMDSVKGCLSDEHCQSSTYYTKDDFNEAHFTLLGVPNKPLHCLDFTATGQKLCHKYRDGKMIPIVPGIQRADWPCFTRAIEDWSQFVSKSGEFKLPCANRRVEGFSGYAVRYLKPELTQNWRYCLNQNPSLDRYGQKPLPFNTLNSFRRFGSHYSRINYLTPWH.

Microtubule inner protein component of sperm flagellar doublet microtubules.

It is found in the cytoplasm. Its subcellular location is the cytoskeleton. It localises to the flagellum axoneme. In terms of biological role, microtubule inner protein (MIP) part of the dynein-decorated doublet microtubules (DMTs) in flagellum axoneme. May serve to reinforce and thus stabilize the microtubule structure in the sperm flagella. In Rattus norvegicus (Rat), this protein is Sperm microtubule inner protein 8 (Spmip8).